The following is a 450-amino-acid chain: Methionine aminopeptidase 2-2 (450 aa).

Basic and acidic residues-rich tracts occupy residues methionine 1–proline 10 and arginine 30–aspartate 39. A disordered region spans residues methionine 1–phenylalanine 100. Residues glycine 47–glycine 56 show a composition bias toward acidic residues. Over residues lysine 69–threonine 86 the composition is skewed to basic residues. Position 211 (histidine 211) interacts with substrate. Aspartate 232, aspartate 243, and histidine 302 together coordinate a divalent metal cation. Substrate is bound at residue histidine 310. 2 residues coordinate a divalent metal cation: glutamate 335 and glutamate 431.

The protein belongs to the peptidase M24A family. Methionine aminopeptidase eukaryotic type 2 subfamily. Co(2+) serves as cofactor. Zn(2+) is required as a cofactor. The cofactor is Mn(2+). It depends on Fe(2+) as a cofactor.

The protein resides in the cytoplasm. It catalyses the reaction Release of N-terminal amino acids, preferentially methionine, from peptides and arylamides.. In terms of biological role, cotranslationally removes the N-terminal methionine from nascent proteins. The N-terminal methionine is often cleaved when the second residue in the primary sequence is small and uncharged (Met-Ala-, Cys, Gly, Pro, Ser, Thr, or Val). This chain is Methionine aminopeptidase 2-2, found in Fusarium vanettenii (strain ATCC MYA-4622 / CBS 123669 / FGSC 9596 / NRRL 45880 / 77-13-4) (Fusarium solani subsp. pisi).